The chain runs to 208 residues: Uracil phosphoribosyltransferase (208 aa).

5-phospho-alpha-D-ribose 1-diphosphate-binding positions include Arg78, Arg103, and 130 to 138; that span reads DPMLATANS. Uracil is bound by residues Ile193 and 198–200; that span reads GDA. Asp199 lines the 5-phospho-alpha-D-ribose 1-diphosphate pocket.

It belongs to the UPRTase family. It depends on Mg(2+) as a cofactor.

The catalysed reaction is UMP + diphosphate = 5-phospho-alpha-D-ribose 1-diphosphate + uracil. It participates in pyrimidine metabolism; UMP biosynthesis via salvage pathway; UMP from uracil: step 1/1. With respect to regulation, allosterically activated by GTP. Its function is as follows. Catalyzes the conversion of uracil and 5-phospho-alpha-D-ribose 1-diphosphate (PRPP) to UMP and diphosphate. The protein is Uracil phosphoribosyltransferase of Brucella ovis (strain ATCC 25840 / 63/290 / NCTC 10512).